The sequence spans 288 residues: 4-hydroxy-3-methylbut-2-enyl diphosphate reductase (288 aa).

Cysteine 12 contacts [4Fe-4S] cluster. Residues histidine 42 and histidine 77 each coordinate (2E)-4-hydroxy-3-methylbut-2-enyl diphosphate. Dimethylallyl diphosphate-binding residues include histidine 42 and histidine 77. Isopentenyl diphosphate is bound by residues histidine 42 and histidine 77. [4Fe-4S] cluster is bound at residue cysteine 99. Histidine 127 is a (2E)-4-hydroxy-3-methylbut-2-enyl diphosphate binding site. Dimethylallyl diphosphate is bound at residue histidine 127. Histidine 127 provides a ligand contact to isopentenyl diphosphate. The active-site Proton donor is the glutamate 129. Threonine 165 serves as a coordination point for (2E)-4-hydroxy-3-methylbut-2-enyl diphosphate. Residue cysteine 193 coordinates [4Fe-4S] cluster. (2E)-4-hydroxy-3-methylbut-2-enyl diphosphate contacts are provided by serine 221, serine 222, asparagine 223, and serine 265. The dimethylallyl diphosphate site is built by serine 221, serine 222, asparagine 223, and serine 265. Isopentenyl diphosphate contacts are provided by serine 221, serine 222, asparagine 223, and serine 265.

Belongs to the IspH family. [4Fe-4S] cluster serves as cofactor.

It carries out the reaction isopentenyl diphosphate + 2 oxidized [2Fe-2S]-[ferredoxin] + H2O = (2E)-4-hydroxy-3-methylbut-2-enyl diphosphate + 2 reduced [2Fe-2S]-[ferredoxin] + 2 H(+). It catalyses the reaction dimethylallyl diphosphate + 2 oxidized [2Fe-2S]-[ferredoxin] + H2O = (2E)-4-hydroxy-3-methylbut-2-enyl diphosphate + 2 reduced [2Fe-2S]-[ferredoxin] + 2 H(+). It functions in the pathway isoprenoid biosynthesis; dimethylallyl diphosphate biosynthesis; dimethylallyl diphosphate from (2E)-4-hydroxy-3-methylbutenyl diphosphate: step 1/1. Its pathway is isoprenoid biosynthesis; isopentenyl diphosphate biosynthesis via DXP pathway; isopentenyl diphosphate from 1-deoxy-D-xylulose 5-phosphate: step 6/6. In terms of biological role, catalyzes the conversion of 1-hydroxy-2-methyl-2-(E)-butenyl 4-diphosphate (HMBPP) into a mixture of isopentenyl diphosphate (IPP) and dimethylallyl diphosphate (DMAPP). Acts in the terminal step of the DOXP/MEP pathway for isoprenoid precursor biosynthesis. This is 4-hydroxy-3-methylbut-2-enyl diphosphate reductase from Caldanaerobacter subterraneus subsp. tengcongensis (strain DSM 15242 / JCM 11007 / NBRC 100824 / MB4) (Thermoanaerobacter tengcongensis).